Reading from the N-terminus, the 150-residue chain is 3-hydroxyacyl-[acyl-carrier-protein] dehydratase FabZ (150 aa).

Histidine 54 is a catalytic residue.

The protein belongs to the thioester dehydratase family. FabZ subfamily.

The protein resides in the cytoplasm. The catalysed reaction is a (3R)-hydroxyacyl-[ACP] = a (2E)-enoyl-[ACP] + H2O. Functionally, involved in unsaturated fatty acids biosynthesis. Catalyzes the dehydration of short chain beta-hydroxyacyl-ACPs and long chain saturated and unsaturated beta-hydroxyacyl-ACPs. The protein is 3-hydroxyacyl-[acyl-carrier-protein] dehydratase FabZ of Vibrio parahaemolyticus serotype O3:K6 (strain RIMD 2210633).